We begin with the raw amino-acid sequence, 106 residues long: Large ribosomal subunit protein uL24 (106 aa).

Belongs to the universal ribosomal protein uL24 family. Part of the 50S ribosomal subunit.

In terms of biological role, one of two assembly initiator proteins, it binds directly to the 5'-end of the 23S rRNA, where it nucleates assembly of the 50S subunit. Functionally, one of the proteins that surrounds the polypeptide exit tunnel on the outside of the subunit. In Orientia tsutsugamushi (strain Boryong) (Rickettsia tsutsugamushi), this protein is Large ribosomal subunit protein uL24.